The primary structure comprises 154 residues: Protein X (154 aa).

Residues 68 to 117 (PCALRFTSARRMETTVNAHQFLPKVLHKRTLGLSAMSTTDLEAYFKDCLF) form a mitochondrial targeting sequence region.

This sequence belongs to the orthohepadnavirus protein X family. As to quaternary structure, may form homodimer. May interact with host CEBPA, CFLAR, CREB1, DDB1, E4F1, HBXIP, HSPD1/HSP60, NFKBIA, POLR2E and SMAD4. Interacts with host SMC5-SMC6 complex and induces its degradation. Interacts with host TRPC4AP; leading to prevent ubiquitination of TRPC4AP. Interacts with host PLSCR1; this interaction promotes ubiquitination and degradation of HBx and impairs HBx-mediated cell proliferation. A fraction may be phosphorylated in insect cells and HepG2 cells, a human hepatoblastoma cell line. Phosphorylated in vitro by host protein kinase C or mitogen-activated protein kinase. N-acetylated in insect cells.

The protein localises to the host cytoplasm. Its subcellular location is the host nucleus. The protein resides in the host mitochondrion. Its function is as follows. Multifunctional protein that plays a role in silencing host antiviral defenses and promoting viral transcription. Does not seem to be essential for HBV infection. May be directly involved in development of cirrhosis and liver cancer (hepatocellular carcinoma). Most of cytosolic activities involve modulation of cytosolic calcium. The effect on apoptosis is controversial depending on the cell types in which the studies have been conducted. May induce apoptosis by localizing in mitochondria and causing loss of mitochondrial membrane potential. May also modulate apoptosis by binding host CFLAR, a key regulator of the death-inducing signaling complex (DISC). Promotes viral transcription by using the host E3 ubiquitin ligase DDB1 to target the SMC5-SMC6 complex to proteasomal degradation. This host complex would otherwise bind to viral episomal DNA, and prevents its transcription. Moderately stimulates transcription of many different viral and cellular transcription elements. Promoters and enhancers stimulated by HBx contain DNA binding sites for NF-kappa-B, AP-1, AP-2, c-EBP, ATF/CREB, or the calcium-activated factor NF-AT. The sequence is that of Protein X from Homo sapiens (Human).